The chain runs to 272 residues: Ribosomal RNA small subunit methyltransferase A (272 aa).

His-10, Leu-12, Gly-37, Glu-57, Asp-82, and Asn-98 together coordinate S-adenosyl-L-methionine.

This sequence belongs to the class I-like SAM-binding methyltransferase superfamily. rRNA adenine N(6)-methyltransferase family. RsmA subfamily.

It localises to the cytoplasm. The enzyme catalyses adenosine(1518)/adenosine(1519) in 16S rRNA + 4 S-adenosyl-L-methionine = N(6)-dimethyladenosine(1518)/N(6)-dimethyladenosine(1519) in 16S rRNA + 4 S-adenosyl-L-homocysteine + 4 H(+). Its function is as follows. Specifically dimethylates two adjacent adenosines (A1518 and A1519) in the loop of a conserved hairpin near the 3'-end of 16S rRNA in the 30S particle. May play a critical role in biogenesis of 30S subunits. The polypeptide is Ribosomal RNA small subunit methyltransferase A (Gloeobacter violaceus (strain ATCC 29082 / PCC 7421)).